The chain runs to 78 residues: Defensin-like protein (78 aa).

A signal peptide spans 1–31 (MGRSIRLFATFFLIAMLFLSTEMGPMTSAEA). 4 disulfide bridges follow: Cys-34–Cys-78, Cys-45–Cys-65, Cys-51–Cys-72, and Cys-55–Cys-74.

Belongs to the DEFL family. In terms of tissue distribution, predominantly expressed in the pistil during all stages of flower development.

Its subcellular location is the secreted. May be involved in the defense of the pistil against pathogen infection. The protein is Defensin-like protein of Petunia integrifolia (Violet-flowered petunia).